Here is a 129-residue protein sequence, read N- to C-terminus: Small ribosomal subunit protein uS11 (129 aa).

It belongs to the universal ribosomal protein uS11 family. As to quaternary structure, part of the 30S ribosomal subunit. Interacts with proteins S7 and S18. Binds to IF-3.

Its function is as follows. Located on the platform of the 30S subunit, it bridges several disparate RNA helices of the 16S rRNA. Forms part of the Shine-Dalgarno cleft in the 70S ribosome. The sequence is that of Small ribosomal subunit protein uS11 from Mannheimia succiniciproducens (strain KCTC 0769BP / MBEL55E).